The primary structure comprises 88 residues: Alpha-latrotoxin associated low molecular weight protein (88 aa).

Positions methionine 1–alanine 18 are cleaved as a signal peptide.

This sequence belongs to the arthropod CHH/MIH/GIH/VIH hormone family. Expressed by the venom gland.

It localises to the secreted. Its function is as follows. May increase the toxicity of alpha-latrotoxin and/or other venom components. Is non-toxic to mice and to the cockroach Periplaneta americana. In Latrodectus hesperus (Western black widow spider), this protein is Alpha-latrotoxin associated low molecular weight protein.